The sequence spans 405 residues: Protein held out wings (405 aa).

The 69-residue stretch at 142–210 folds into the KH domain; that stretch reads YVPVREHPDF…HLSDDLHVLI (69 aa).

In terms of assembly, homodimer. Interacts with Sxl; promoting nuclear retention of msl-2 transcripts. During embryogenesis, expression is seen in mesodermal precursors of somatic, visceral and pharyngeal muscle. Later in embryogenesis, expression is restricted to heart and muscle attachment sites of the epidermis. During onset of metamorphosis, expression is seen in muscle and muscle attachment cells.

It localises to the nucleus. RNA-binding protein involved in muscle development and dosage compensation. Vital role in steroid regulation of muscle development and to control heart rate. Required during embryogenesis, in late stages of somatic muscle development, for myotube migration and during metamorphosis for muscle reorganization. Required for integrin-mediated cell-adhesion in wing blade. Together with Sxl, acts as an inhibitor of dosage compensation in females by preventing production of msl-2 protein, an essential component of the MSL complex. Specifically binds to the 5'-UTR of msl-2 transcripts and cooperates with Sxl to promote nuclear retention of msl-2 mRNAs. The protein is Protein held out wings (how) of Drosophila melanogaster (Fruit fly).